A 639-amino-acid polypeptide reads, in one-letter code: Mediator of RNA polymerase II transcription subunit 17 (639 aa).

Belongs to the Mediator complex subunit 17 family. As to quaternary structure, component of the Mediator complex.

It is found in the nucleus. Its function is as follows. Component of the Mediator complex, a coactivator involved in the regulated transcription of nearly all RNA polymerase II-dependent genes. Mediator functions as a bridge to convey information from gene-specific regulatory proteins to the basal RNA polymerase II transcription machinery. Mediator is recruited to promoters by direct interactions with regulatory proteins and serves as a scaffold for the assembly of a functional preinitiation complex with RNA polymerase II and the general transcription factors. The sequence is that of Mediator of RNA polymerase II transcription subunit 17 (med17) from Xenopus tropicalis (Western clawed frog).